Here is a 295-residue protein sequence, read N- to C-terminus: Tyrosine recombinase XerD (295 aa).

The Core-binding (CB) domain maps to 1-85; the sequence is MNTIIEEYLN…TIRSFHQFAL (85 aa). A Tyr recombinase domain is found at 106–289; the sequence is KLPDVLEIDE…SKSQIRKMYT (184 aa). Catalysis depends on residues arginine 146, lysine 170, histidine 241, arginine 244, and histidine 267. The active-site O-(3'-phospho-DNA)-tyrosine intermediate is the tyrosine 276.

This sequence belongs to the 'phage' integrase family. XerD subfamily. Forms a cyclic heterotetrameric complex composed of two molecules of XerC and two molecules of XerD.

It localises to the cytoplasm. Its function is as follows. Site-specific tyrosine recombinase, which acts by catalyzing the cutting and rejoining of the recombining DNA molecules. The XerC-XerD complex is essential to convert dimers of the bacterial chromosome into monomers to permit their segregation at cell division. It also contributes to the segregational stability of plasmids. In Staphylococcus epidermidis (strain ATCC 12228 / FDA PCI 1200), this protein is Tyrosine recombinase XerD.